A 172-amino-acid polypeptide reads, in one-letter code: Myosin regulatory light chain 2, smooth muscle major isoform (172 aa).

Basic residues predominate over residues 1-16 (MSSKRAKAKTTKKRPQ). Residues 1 to 20 (MSSKRAKAKTTKKRPQRATS) are disordered. The residue at position 2 (serine 2) is an N-acetylserine. EF-hand domains lie at 29–64 (SQIQEFKEAFNMIDQNRDGFIDKEDLHDMLASMGKN), 98–133 (DPEDVIRNAFACFDEEASGFIHEDHLRELLTTMGDR), and 134–169 (FTDEEVDEMYREAPIDKKGNFNYVEFTRILKHGAKD). Positions 42, 44, 46, and 53 each coordinate Ca(2+).

As to quaternary structure, myosin is a hexamer of 2 heavy chains and 4 light chains.

Myosin regulatory subunit that plays an important role in regulation of both smooth muscle and nonmuscle cell contractile activity. Implicated in cytokinesis, receptor capping, and cell locomotion. In Gallus gallus (Chicken), this protein is Myosin regulatory light chain 2, smooth muscle major isoform.